A 317-amino-acid chain; its full sequence is Glycerol-3-phosphate dehydrogenase [NAD(P)+] (317 aa).

NADPH-binding residues include Trp-20, Arg-40, Arg-41, and Lys-88. The sn-glycerol 3-phosphate site is built by Lys-88 and Gly-116. Ser-120 is an NADPH binding site. The sn-glycerol 3-phosphate site is built by Lys-171, Asp-224, Ser-234, Arg-235, and Asn-236. Lys-171 (proton acceptor) is an active-site residue. Position 235 (Arg-235) interacts with NADPH. An NADPH-binding site is contributed by Glu-261.

This sequence belongs to the NAD-dependent glycerol-3-phosphate dehydrogenase family.

It localises to the cytoplasm. It carries out the reaction sn-glycerol 3-phosphate + NAD(+) = dihydroxyacetone phosphate + NADH + H(+). The enzyme catalyses sn-glycerol 3-phosphate + NADP(+) = dihydroxyacetone phosphate + NADPH + H(+). The protein operates within membrane lipid metabolism; glycerophospholipid metabolism. Its function is as follows. Catalyzes the reduction of the glycolytic intermediate dihydroxyacetone phosphate (DHAP) to sn-glycerol 3-phosphate (G3P), the key precursor for phospholipid synthesis. This is Glycerol-3-phosphate dehydrogenase [NAD(P)+] from Synechocystis sp. (strain ATCC 27184 / PCC 6803 / Kazusa).